The primary structure comprises 1775 residues: Protein TIC 214 (1775 aa).

The next 6 helical transmembrane spans lie at 19-39 (IINSVVVVGLYYGFLTTFSIG), 68-88 (FIAGQLMMFISIYYAPLHLAL), 91-111 (PHTITVLALPYLLFHFFWNNH), 133-153 (VFLNNLIFQLFNHFILPSSML), 176-196 (VGWLIGHILFMKWVGLVLVWI), and 227-247 (IFSILLFITCVYYLGRIPSPI). A disordered region spans residues 1491-1512 (KESAGQGERESDNEKKKNLESA).

This sequence belongs to the TIC214 family. In terms of assembly, part of the Tic complex.

The protein localises to the plastid. The protein resides in the chloroplast inner membrane. In terms of biological role, involved in protein precursor import into chloroplasts. May be part of an intermediate translocation complex acting as a protein-conducting channel at the inner envelope. The polypeptide is Protein TIC 214 (Lobularia maritima (Sweet alyssum)).